Here is a 239-residue protein sequence, read N- to C-terminus: Sensory rhodopsin-2 (239 aa).

Residues 1–3 lie on the Extracellular side of the membrane; that stretch reads MVG. A helical transmembrane segment spans residues 4 to 25; it reads LTTLFWLGAIGMLVGTLAFAWA. The Cytoplasmic portion of the chain corresponds to 26 to 33; sequence GRDAGSGE. A helical transmembrane segment spans residues 34-55; the sequence is RRYYVTLVGISGIAAVAYVVMA. Over 56–69 the chain is Extracellular; that stretch reads LGVGWVPVAERTVF. A helical transmembrane segment spans residues 70–91; sequence APRYIDWILTTPLIVYFLGLLA. The Cytoplasmic portion of the chain corresponds to 92 to 94; it reads GLD. A helical membrane pass occupies residues 95–117; that stretch reads SREFGIVITLNTVVMLAGFAGAM. The Extracellular segment spans residues 118-121; the sequence is VPGI. The chain crosses the membrane as a helical span at residues 122-149; the sequence is ERYALFGMGAVAFLGLVYYLVGPMTESA. Residues 150 to 153 are Cytoplasmic-facing; the sequence is SQRS. A helical transmembrane segment spans residues 154–181; sequence SGIKSLYVRLRNLTVILWAIYPFIWLLG. The Extracellular portion of the chain corresponds to 182 to 189; that stretch reads PPGVALLT. Residues 190 to 222 traverse the membrane as a helical segment; it reads PTVDVALIVYLDLVTKVGFGFIALDAAATLRAE. N6-(retinylidene)lysine is present on lysine 205. The Cytoplasmic segment spans residues 223–239; sequence HGESLAGVDTDAPAVAD.

It belongs to the archaeal/bacterial/fungal opsin family. Homodimer. Interacts with HTR-II.

Its subcellular location is the cell membrane. Its function is as follows. Photophobic photoreceptor responsible for the negative phototaxis. Activates the sensory rhodopsin II transducer (HTR-II) in response to blue light. The protein is Sensory rhodopsin-2 (sop2) of Natronomonas pharaonis (Natronobacterium pharaonis).